The following is a 1581-amino-acid chain: Mediator of RNA polymerase II transcription subunit 1 (1581 aa).

The interval 1–670 (MKAQGETEES…YGSSPLERQN (670 aa)) is interaction with the Mediator complex and THRA. The interaction with ESR1 stretch occupies residues 16–590 (MSSLLERLHA…SIKDRHESVG (575 aa)). Interaction with the Mediator complex stretches follow at residues 108–212 (FYVE…GYLT) and 215–390 (SGGH…SLQG). Residues 405–644 (PLILNLIRHQ…MAGNTKNHPM (240 aa)) are interaction with THRA. Residues 542–789 (PASSPGYGMT…TDILSDIAEE (248 aa)) are interaction with VDR. Serine 588 is modified (phosphoserine). Residues 604–608 (LTSLL) carry the LXXLL motif 1 motif. Disordered regions lie at residues 609–705 (QITG…HQTE), 792–820 (KLPSTSDDCPAIGTPLRDSSSSGHSQSTL), 874–893 (SQSGFGEEYFDESSQSGDND), and 948–1566 (EHHS…DFMI). Pro residues predominate over residues 622-632 (PTPPHHTPPPV). Residues 622-701 (PTPPHHTPPP…SSRLPPEKPK (80 aa)) are interaction with PPARGC1A and THRA. The LXXLL motif 2 motif lies at 645 to 649 (LMNLL). Residues 655–675 (QDFSTLYGSSPLERQNSSSGS) show a composition bias toward polar residues. An interaction with ESR1 region spans residues 656–1066 (DFSTLYGSSP…TPPIPKITIQ (411 aa)). A Phosphoserine modification is found at serine 664. Residues 681 to 715 (CSGSNKTKKKKSSRLPPEKPKHQTEDDFQRELFSM) are interaction with GATA1. Over residues 696-705 (PPEKPKHQTE) the composition is skewed to basic and acidic residues. The residue at position 795 (serine 795) is a Phosphoserine. Position 805 is a phosphothreonine (threonine 805). Residues 808–820 (RDSSSSGHSQSTL) show a composition bias toward polar residues. The Integrase domain-binding motif (IBM) signature appears at 875 to 902 (QSGFGEEYFDESSQSGDNDDFKGFASQA). 2 positions are modified to phosphoserine: serine 887 and serine 953. Residues 963–974 (LGKEKTQKRVKE) show a composition bias toward basic and acidic residues. Threonine 1032 carries the phosphothreonine; by MAPK1 or MAPK3 modification. Over residues 1034 to 1045 (PTSTGGSKSPGS) the composition is skewed to low complexity. A phosphothreonine mark is found at threonine 1051 and threonine 1057. 2 stretches are compositionally biased toward low complexity: residues 1078–1094 (SSHSQYTSSGSVSSSGS) and 1101–1156 (SSSS…PGSS). Serine 1156 carries the phosphoserine modification. A compositionally biased stretch (polar residues) spans 1162 to 1195 (GLSSGSSSTKMKPQGKPSSLMNPSLSKPNISPSH). Lysine 1177 is subject to N6-acetyllysine. Serine 1207 carries the phosphoserine modification. A Phosphothreonine modification is found at threonine 1215. Low complexity-rich tracts occupy residues 1218–1227 (SSKAKSPISS) and 1234–1293 (MSGT…SKGK). Phosphoserine is present on serine 1223. Positions 1249-1421 (LGSSGSLSQK…KPGESSGEGL (173 aa)) are interaction with TP53. Position 1302 is a phosphoserine (serine 1302). The segment covering 1330-1345 (GVSTNSSSHPMSSKHN) has biased composition (polar residues). Serine 1347 carries the phosphoserine modification. Residues 1352 to 1364 (QGKREKSDKDKSK) show a composition bias toward basic and acidic residues. Serine 1403 and serine 1433 each carry phosphoserine. 2 stretches are compositionally biased toward polar residues: residues 1425–1440 (MASSKNYGSPLISGST) and 1448–1482 (PSHSKSPAYTPQNLDSESESGSSIAEKSYQNSPSS). Threonine 1440 carries the post-translational modification Phosphothreonine. Threonine 1457 bears the Phosphothreonine; by MAPK1 or MAPK3 mark. Phosphoserine is present on residues serine 1463, serine 1465, serine 1479, serine 1481, and serine 1482. The segment covering 1496 to 1505 (KHKKHKKEKK) has biased composition (basic residues). The span at 1506 to 1522 (KVKDKDRDRDRDKDRDK) shows a compositional bias: basic and acidic residues. Lysine 1529 carries the N6-acetyllysine modification. Over residues 1533–1552 (WSKSPISSDQSLSMTSNTIL) the composition is skewed to polar residues.

It belongs to the Mediator complex subunit 1 family. Component of the Mediator complex, which is composed of MED1, MED4, MED6, MED7, MED8, MED9, MED10, MED11, MED12, MED13, MED13L, MED14, MED15, MED16, MED17, MED18, MED19, MED20, MED21, MED22, MED23, MED24, MED25, MED26, MED27, MED29, MED30, MED31, CCNC, CDK8 and CDC2L6/CDK11. The MED12, MED13, CCNC and CDK8 subunits form a distinct module termed the CDK8 module. Mediator containing the CDK8 module is less active than Mediator lacking this module in supporting transcriptional activation. Individual preparations of the Mediator complex lacking one or more distinct subunits have been variously termed ARC, CRSP, DRIP, PC2, SMCC and TRAP. This subunit specifically interacts with a number of nuclear receptors in a ligand-dependent fashion including AR, ESR1, ESR2, PPARA, PPARG, RORA, RXRA, RXRG, THRA, THRB and VDR. Interacts with CTNNB1, GABPA, GLI3, PPARGC1A and TP53. Interacts with YWHAH. Interacts with CLOCK; this interaction requires the presence of THRAP3. Interacts with GATA1 and CCAR1. Interacts with NR4A3. Interacts (via IBM motif) with PSIP1 (via IBD domain); phosphorylation increases its affinity for PSIP1. Interacts with USP22. Post-translationally, phosphorylated by MAPK1 or MAPK3 during G2/M phase which may enhance protein stability and promote entry into the nucleolus. Phosphorylation increases its interaction with PSIP1. In terms of tissue distribution, ubiquitously expressed.

The protein resides in the nucleus. In terms of biological role, component of the Mediator complex, a coactivator involved in the regulated transcription of nearly all RNA polymerase II-dependent genes. Mediator functions as a bridge to convey information from gene-specific regulatory proteins to the basal RNA polymerase II transcription machinery. Mediator is recruited to promoters by direct interactions with regulatory proteins and serves as a scaffold for the assembly of a functional preinitiation complex with RNA polymerase II and the general transcription factors. Acts as a coactivator for GATA1-mediated transcriptional activation during erythroid differentiation of K562 erythroleukemia cells. The protein is Mediator of RNA polymerase II transcription subunit 1 (MED1) of Homo sapiens (Human).